We begin with the raw amino-acid sequence, 156 residues long: 6,7-dimethyl-8-ribityllumazine synthase (156 aa).

Residues phenylalanine 23, 57–59 (AFE), and 81–83 (AVI) each bind 5-amino-6-(D-ribitylamino)uracil. A (2S)-2-hydroxy-3-oxobutyl phosphate-binding site is contributed by 86–87 (ST). Catalysis depends on histidine 89, which acts as the Proton donor. Position 114 (phenylalanine 114) interacts with 5-amino-6-(D-ribitylamino)uracil. Residue arginine 128 coordinates (2S)-2-hydroxy-3-oxobutyl phosphate.

It belongs to the DMRL synthase family.

The enzyme catalyses (2S)-2-hydroxy-3-oxobutyl phosphate + 5-amino-6-(D-ribitylamino)uracil = 6,7-dimethyl-8-(1-D-ribityl)lumazine + phosphate + 2 H2O + H(+). It functions in the pathway cofactor biosynthesis; riboflavin biosynthesis; riboflavin from 2-hydroxy-3-oxobutyl phosphate and 5-amino-6-(D-ribitylamino)uracil: step 1/2. Its function is as follows. Catalyzes the formation of 6,7-dimethyl-8-ribityllumazine by condensation of 5-amino-6-(D-ribitylamino)uracil with 3,4-dihydroxy-2-butanone 4-phosphate. This is the penultimate step in the biosynthesis of riboflavin. The chain is 6,7-dimethyl-8-ribityllumazine synthase from Brachyspira hyodysenteriae (strain ATCC 49526 / WA1).